A 167-amino-acid chain; its full sequence is Small ribosomal subunit protein uS5 (167 aa).

The S5 DRBM domain occupies 12-75; the sequence is LEDQVVSINR…DAAKKSLIEV (64 aa).

It belongs to the universal ribosomal protein uS5 family. Part of the 30S ribosomal subunit. Contacts proteins S4 and S8.

Functionally, with S4 and S12 plays an important role in translational accuracy. Its function is as follows. Located at the back of the 30S subunit body where it stabilizes the conformation of the head with respect to the body. This is Small ribosomal subunit protein uS5 from Lacticaseibacillus paracasei (strain ATCC 334 / BCRC 17002 / CCUG 31169 / CIP 107868 / KCTC 3260 / NRRL B-441) (Lactobacillus paracasei).